A 148-amino-acid chain; its full sequence is Deoxyuridine 5'-triphosphate nucleotidohydrolase (148 aa).

Residues 68–70, asparagine 81, 85–87, and lysine 95 each bind substrate; these read RSG and TID.

This sequence belongs to the dUTPase family. The cofactor is Mg(2+).

It catalyses the reaction dUTP + H2O = dUMP + diphosphate + H(+). It participates in pyrimidine metabolism; dUMP biosynthesis; dUMP from dCTP (dUTP route): step 2/2. Functionally, this enzyme is involved in nucleotide metabolism: it produces dUMP, the immediate precursor of thymidine nucleotides and it decreases the intracellular concentration of dUTP so that uracil cannot be incorporated into DNA. In Rickettsia rickettsii (strain Iowa), this protein is Deoxyuridine 5'-triphosphate nucleotidohydrolase.